The chain runs to 906 residues: Pre-mRNA-splicing factor prp1 (906 aa).

Disordered stretches follow at residues 50–129 and 142–164; these read IEQR…VSSQ and DEDW…KQPR. Basic and acidic residues predominate over residues 108–124; that stretch reads REKQEQLQKEKYEKENP. The residue at position 235 (serine 235) is a Phosphoserine. HAT repeat units lie at residues 258–290, 322–353, 354–384, 385–416, 524–556, 558–590, 592–624, 693–725, 726–758, 760–792, and 824–856; these read GDIR…LEEV, HPAA…KLEN, QAQH…NLEE, EVDN…LETY, KCID…LEKL, GTTE…ERKN, NDIA…IEFV, EQIE…LEEK, QSVI…MELR, GNIS…LEPR, and KKAD…YSLE.

In terms of assembly, interacts with brr2 and spp42.

It localises to the nucleus. Functionally, involved in pre-mRNA splicing. Interacts with prp6 and prp13. May also be involved in the regulation of the G0-G1/G2 transition. Required for pre-spliceosome formation, which is the first step of pre-mRNA splicing. This protein is associated with snRNP U5. Has a role in branch site-3' splice site selection. Associates with the branch site-3' splice 3'-exon region. This chain is Pre-mRNA-splicing factor prp1 (prp1), found in Schizosaccharomyces pombe (strain 972 / ATCC 24843) (Fission yeast).